Here is a 388-residue protein sequence, read N- to C-terminus: MGKKAIQFGGGNIGRGFVAEFLHEAGYEVVFIDVVDKIIDALKSTPSYEVTEVSEEGEKTKTITNYRAINSKTNEEDVVKEIGTADVVTCAVGPNVLKFIAPVIAKGIDARTASKPVAVIACENAIGATDTLRGFIEQNTDKDRLSSMSERARFANSAIDRIVPNQPPNAGLNVRIEKFYEWTVEQTPFGEFGHPDIPAIHWVDDLKPYIERKLFTVNTGHATTAYYGHMRGKKMIADALADAEIRQIVHKVLEQTAKLITTKHEITEQEQNEYVDTIVKRMSNPFLEDNVERVGRAPLRKLSRNERFIGPASQLAEKGLPFDALLGSIEMALRFQNVPGDEESAELAKILKEMSAEEATGKLTGLEKHHPLYEPVQNVIAKVQKDSK.

Residue 5–16 participates in NAD(+) binding; it reads AIQFGGGNIGRG. K213 is a catalytic residue.

The protein belongs to the mannitol dehydrogenase family. Monomer.

It catalyses the reaction D-mannitol 1-phosphate + NAD(+) = beta-D-fructose 6-phosphate + NADH + H(+). In terms of biological role, catalyzes the NAD(H)-dependent interconversion of D-fructose 6-phosphate and D-mannitol 1-phosphate in the mannitol metabolic pathway. In Aspergillus fumigatus (strain CBS 144.89 / FGSC A1163 / CEA10) (Neosartorya fumigata), this protein is Mannitol-1-phosphate 5-dehydrogenase (mpdA).